The sequence spans 243 residues: 1-(5-phosphoribosyl)-5-[(5-phosphoribosylamino)methylideneamino] imidazole-4-carboxamide isomerase (243 aa).

D17 serves as the catalytic Proton acceptor. The active-site Proton donor is D138.

It belongs to the HisA/HisF family.

It localises to the cytoplasm. The catalysed reaction is 1-(5-phospho-beta-D-ribosyl)-5-[(5-phospho-beta-D-ribosylamino)methylideneamino]imidazole-4-carboxamide = 5-[(5-phospho-1-deoxy-D-ribulos-1-ylimino)methylamino]-1-(5-phospho-beta-D-ribosyl)imidazole-4-carboxamide. The protein operates within amino-acid biosynthesis; L-histidine biosynthesis; L-histidine from 5-phospho-alpha-D-ribose 1-diphosphate: step 4/9. This Deinococcus geothermalis (strain DSM 11300 / CIP 105573 / AG-3a) protein is 1-(5-phosphoribosyl)-5-[(5-phosphoribosylamino)methylideneamino] imidazole-4-carboxamide isomerase.